A 482-amino-acid polypeptide reads, in one-letter code: Aspartyl/glutamyl-tRNA(Asn/Gln) amidotransferase subunit B (482 aa).

The protein belongs to the GatB/GatE family. GatB subfamily. As to quaternary structure, heterotrimer of A, B and C subunits.

It catalyses the reaction L-glutamyl-tRNA(Gln) + L-glutamine + ATP + H2O = L-glutaminyl-tRNA(Gln) + L-glutamate + ADP + phosphate + H(+). The catalysed reaction is L-aspartyl-tRNA(Asn) + L-glutamine + ATP + H2O = L-asparaginyl-tRNA(Asn) + L-glutamate + ADP + phosphate + 2 H(+). Allows the formation of correctly charged Asn-tRNA(Asn) or Gln-tRNA(Gln) through the transamidation of misacylated Asp-tRNA(Asn) or Glu-tRNA(Gln) in organisms which lack either or both of asparaginyl-tRNA or glutaminyl-tRNA synthetases. The reaction takes place in the presence of glutamine and ATP through an activated phospho-Asp-tRNA(Asn) or phospho-Glu-tRNA(Gln). The polypeptide is Aspartyl/glutamyl-tRNA(Asn/Gln) amidotransferase subunit B (Azotobacter vinelandii (strain DJ / ATCC BAA-1303)).